The following is a 322-amino-acid chain: Acetylglutamate kinase (322 aa).

Substrate contacts are provided by residues 89–90 (GG), R111, and N217.

Belongs to the acetylglutamate kinase family. ArgB subfamily.

The protein localises to the cytoplasm. It catalyses the reaction N-acetyl-L-glutamate + ATP = N-acetyl-L-glutamyl 5-phosphate + ADP. The protein operates within amino-acid biosynthesis; L-arginine biosynthesis; N(2)-acetyl-L-ornithine from L-glutamate: step 2/4. In terms of biological role, catalyzes the ATP-dependent phosphorylation of N-acetyl-L-glutamate. In Ehrlichia ruminantium (strain Gardel), this protein is Acetylglutamate kinase.